A 490-amino-acid polypeptide reads, in one-letter code: Glycogen synthase kinase-3 alpha (490 aa).

A compositionally biased stretch (gly residues) spans 1–15 (MSGGGPSGGGPGGSG). A disordered region spans residues 1 to 97 (MSGGGPSGGG…PPGVKLGRDS (97 aa)). Ser-2 is modified (N-acetylserine). Ser-2 bears the Phosphoserine mark. Ser-21 is subject to Phosphoserine; by PKB/AKT1. Residues 25–82 (PGGGGGGGGGGPGGSASGPGGTGGGKASVGAMGGGVGASSSGGGPSGSGGGGSGGPGA) show a composition bias toward gly residues. Residues Ser-72, Ser-77, and Ser-97 each carry the phosphoserine modification. One can recognise a Protein kinase domain in the interval 119–404 (YTDIKVIGNG…PLEACAHSFF (286 aa)). Residues 125–133 (IGNGSFGVV) and Lys-148 each bind ATP. Asp-244 serves as the catalytic Proton acceptor. At Tyr-279 the chain carries Phosphotyrosine. A disordered region spans residues 451 to 490 (GPASPLTTSYNPSSQALTEAQTGQDWQPSDATTATLASSS). A compositionally biased stretch (polar residues) spans 455 to 480 (PLTTSYNPSSQALTEAQTGQDWQPSD). Low complexity predominate over residues 481–490 (ATTATLASSS).

Belongs to the protein kinase superfamily. CMGC Ser/Thr protein kinase family. GSK-3 subfamily. As to quaternary structure, monomer. Interacts with AXIN1 and CTNNB1/beta-catenin. Interacts with ARRB2. Interacts with CTNND2. Interacts with LMBR1L. Interacts with DDX3X. Interacts with TNFRSF10B. Phosphorylated by AKT1 at Ser-21: upon insulin-mediated signaling, the activated PKB/AKT1 protein kinase phosphorylates and deactivates GSK3A, resulting in the dephosphorylation and activation of GYS1. Activated by phosphorylation at Tyr-279.

The enzyme catalyses L-seryl-[tau protein] + ATP = O-phospho-L-seryl-[tau protein] + ADP + H(+). It carries out the reaction L-threonyl-[tau protein] + ATP = O-phospho-L-threonyl-[tau protein] + ADP + H(+). The catalysed reaction is L-seryl-[protein] + ATP = O-phospho-L-seryl-[protein] + ADP + H(+). It catalyses the reaction L-threonyl-[protein] + ATP = O-phospho-L-threonyl-[protein] + ADP + H(+). With respect to regulation, activated by phosphorylation at Tyr-279. In response to insulin, inhibited by phosphorylation at Ser-21 by PKB/AKT1; phosphorylation at this site causes a conformational change, preventing access of substrates to the active site. Inhibited by lithium. Constitutively active protein kinase that acts as a negative regulator in the hormonal control of glucose homeostasis, Wnt signaling and regulation of transcription factors and microtubules, by phosphorylating and inactivating glycogen synthase (GYS1 or GYS2), CTNNB1/beta-catenin, APC and AXIN1. Requires primed phosphorylation of the majority of its substrates. Contributes to insulin regulation of glycogen synthesis by phosphorylating and inhibiting GYS1 activity and hence glycogen synthesis. Regulates glycogen metabolism in liver, but not in muscle. May also mediate the development of insulin resistance by regulating activation of transcription factors. In Wnt signaling, regulates the level and transcriptional activity of nuclear CTNNB1/beta-catenin. Facilitates amyloid precursor protein (APP) processing and the generation of APP-derived amyloid plaques found in Alzheimer disease. May be involved in the regulation of replication in pancreatic beta-cells. Is necessary for the establishment of neuronal polarity and axon outgrowth. Through phosphorylation of the anti-apoptotic protein MCL1, may control cell apoptosis in response to growth factors deprivation. Acts as a regulator of autophagy by mediating phosphorylation of KAT5/TIP60 under starvation conditions, activating KAT5/TIP60 acetyltransferase activity and promoting acetylation of key autophagy regulators, such as ULK1 and RUBCNL/Pacer. Negatively regulates extrinsic apoptotic signaling pathway via death domain receptors. Promotes the formation of an anti-apoptotic complex, made of DDX3X, BRIC2 and GSK3B, at death receptors, including TNFRSF10B. The anti-apoptotic function is most effective with weak apoptotic signals and can be overcome by stronger stimulation. This Mus musculus (Mouse) protein is Glycogen synthase kinase-3 alpha (Gsk3a).